The primary structure comprises 310 residues: Beta sliding clamp (310 aa).

Belongs to the beta sliding clamp family. Forms a ring-shaped head-to-tail homodimer around DNA which binds and tethers DNA polymerases and other proteins to the DNA. The DNA replisome complex has a single clamp-loading complex (3 tau and 1 each of delta, delta', psi and chi subunits) which binds 3 Pol III cores (1 core on the leading strand and 2 on the lagging strand) each with a beta sliding clamp dimer. Additional proteins in the replisome are other copies of gamma, psi and chi, Ssb, DNA helicase and RNA primase.

It localises to the cytoplasm. Functionally, confers DNA tethering and processivity to DNA polymerases and other proteins. Acts as a clamp, forming a ring around DNA (a reaction catalyzed by the clamp-loading complex) which diffuses in an ATP-independent manner freely and bidirectionally along dsDNA. Initially characterized for its ability to contact the catalytic subunit of DNA polymerase III (Pol III), a complex, multichain enzyme responsible for most of the replicative synthesis in bacteria; Pol III exhibits 3'-5' exonuclease proofreading activity. The beta chain is required for initiation of replication as well as for processivity of DNA replication. The protein is Beta sliding clamp (dnaN) of Micrococcus luteus (Micrococcus lysodeikticus).